Consider the following 277-residue polypeptide: Formamidopyrimidine-DNA glycosylase (277 aa).

The Schiff-base intermediate with DNA role is filled by Pro-2. Glu-3 serves as the catalytic Proton donor. Catalysis depends on Lys-58, which acts as the Proton donor; for beta-elimination activity. His-95, Arg-113, and Arg-158 together coordinate DNA. The FPG-type zinc-finger motif lies at 243-277 (GVYDRANQPCLRCGGVVRQIRQAGRSTYYCTGCQH). Catalysis depends on Arg-267, which acts as the Proton donor; for delta-elimination activity.

Belongs to the FPG family. In terms of assembly, monomer. Zn(2+) is required as a cofactor.

It catalyses the reaction Hydrolysis of DNA containing ring-opened 7-methylguanine residues, releasing 2,6-diamino-4-hydroxy-5-(N-methyl)formamidopyrimidine.. It carries out the reaction 2'-deoxyribonucleotide-(2'-deoxyribose 5'-phosphate)-2'-deoxyribonucleotide-DNA = a 3'-end 2'-deoxyribonucleotide-(2,3-dehydro-2,3-deoxyribose 5'-phosphate)-DNA + a 5'-end 5'-phospho-2'-deoxyribonucleoside-DNA + H(+). Functionally, involved in base excision repair of DNA damaged by oxidation or by mutagenic agents. Acts as a DNA glycosylase that recognizes and removes damaged bases. Has a preference for oxidized purines, such as 7,8-dihydro-8-oxoguanine (8-oxoG). Has AP (apurinic/apyrimidinic) lyase activity and introduces nicks in the DNA strand. Cleaves the DNA backbone by beta-delta elimination to generate a single-strand break at the site of the removed base with both 3'- and 5'-phosphates. The sequence is that of Formamidopyrimidine-DNA glycosylase from Dechloromonas aromatica (strain RCB).